Here is a 282-residue protein sequence, read N- to C-terminus: Phosphatidylglycerol--prolipoprotein diacylglyceryl transferase (282 aa).

The next 4 helical transmembrane spans lie at 23–43 (IGPL…LLGW), 71–91 (FIVW…IFFY), 106–126 (IWNG…AMII), and 132–152 (GIPI…GLFF). Residue Arg-154 participates in a 1,2-diacyl-sn-glycero-3-phospho-(1'-sn-glycerol) binding. 3 consecutive transmembrane segments (helical) span residues 189 to 209 (LYEA…LVYG), 217 to 237 (GFIT…VEFF), and 252 to 272 (WLTM…WAML).

This sequence belongs to the Lgt family.

It is found in the cell inner membrane. The enzyme catalyses L-cysteinyl-[prolipoprotein] + a 1,2-diacyl-sn-glycero-3-phospho-(1'-sn-glycerol) = an S-1,2-diacyl-sn-glyceryl-L-cysteinyl-[prolipoprotein] + sn-glycerol 1-phosphate + H(+). It participates in protein modification; lipoprotein biosynthesis (diacylglyceryl transfer). Functionally, catalyzes the transfer of the diacylglyceryl group from phosphatidylglycerol to the sulfhydryl group of the N-terminal cysteine of a prolipoprotein, the first step in the formation of mature lipoproteins. The sequence is that of Phosphatidylglycerol--prolipoprotein diacylglyceryl transferase from Rhizobium leguminosarum bv. trifolii (strain WSM2304).